The primary structure comprises 219 residues: Small ribosomal subunit protein uS3 (219 aa).

The KH type-2 domain occupies 38–106; it reads VRKFVKTKLQ…QVAVNIVEVK (69 aa).

It belongs to the universal ribosomal protein uS3 family. As to quaternary structure, part of the 30S ribosomal subunit. Forms a tight complex with proteins S10 and S14.

Functionally, binds the lower part of the 30S subunit head. Binds mRNA in the 70S ribosome, positioning it for translation. The chain is Small ribosomal subunit protein uS3 from Desulfitobacterium hafniense (strain DSM 10664 / DCB-2).